We begin with the raw amino-acid sequence, 348 residues long: Major outer membrane protein P.IB (348 aa).

The N-terminal stretch at 1–19 (MKKSLIALTLAALPVAAMA) is a signal peptide.

This sequence belongs to the Gram-negative porin family. Homotrimer.

The protein resides in the cell outer membrane. Functionally, serves as a slightly cation selective porin. Major antigen on the gonococcal cell surface and it may have pathogenic properties in addition to its porin activity. This Neisseria gonorrhoeae protein is Major outer membrane protein P.IB (porB).